Reading from the N-terminus, the 363-residue chain is NADH-quinone oxidoreductase subunit H (363 aa).

Helical transmembrane passes span 62 to 82 (GPMY…KLLF), 96 to 116 (FVIA…VVPF), 127 to 147 (VGLL…ILAG), 163 to 183 (AAQV…VMIA), 202 to 222 (FFDW…VSGV), 238 to 257 (EIVA…LFFL), 264 to 286 (ILVS…QGWV), 299 to 319 (KGGW…YIWF), and 339 to 359 (FIPL…YGVI).

Belongs to the complex I subunit 1 family. In terms of assembly, NDH-1 is composed of 14 different subunits. Subunits NuoA, H, J, K, L, M, N constitute the membrane sector of the complex.

It localises to the cell inner membrane. It carries out the reaction a quinone + NADH + 5 H(+)(in) = a quinol + NAD(+) + 4 H(+)(out). In terms of biological role, NDH-1 shuttles electrons from NADH, via FMN and iron-sulfur (Fe-S) centers, to quinones in the respiratory chain. The immediate electron acceptor for the enzyme in this species is believed to be ubiquinone. Couples the redox reaction to proton translocation (for every two electrons transferred, four hydrogen ions are translocated across the cytoplasmic membrane), and thus conserves the redox energy in a proton gradient. This subunit may bind ubiquinone. The protein is NADH-quinone oxidoreductase subunit H of Xanthomonas axonopodis pv. citri (strain 306).